Reading from the N-terminus, the 302-residue chain is Arginase (302 aa).

4 residues coordinate Mn(2+): H103, D126, H128, and D130. Substrate is bound by residues 128–132 (HGDLN), 139–141 (SGN), and D180. The Mn(2+) site is built by D229 and D231. Residues T243 and E274 each contribute to the substrate site.

This sequence belongs to the arginase family. Mn(2+) serves as cofactor.

It carries out the reaction L-arginine + H2O = urea + L-ornithine. The protein operates within nitrogen metabolism; urea cycle; L-ornithine and urea from L-arginine: step 1/1. This chain is Arginase (arg), found in Staphylococcus aureus (strain COL).